Reading from the N-terminus, the 1040-residue chain is Multidrug resistance protein MdtB (1040 aa).

11 consecutive transmembrane segments (helical) span residues 15-37, 343-365, 369-391, 398-420, 440-462, 474-496, 535-557, 867-889, 909-931, 968-990, and 1000-1022; these read LFIL…GIIG, VQFE…LRNA, LIPS…FLGF, LMAL…ENIA, IGFT…LFMG, VTLA…MMCA, HPWL…YIWI, VWLI…ESFI, LMMA…IGIV, ILMT…GVGA, and MVGG…YLLF.

It belongs to the resistance-nodulation-cell division (RND) (TC 2.A.6) family. MdtB subfamily. In terms of assembly, part of a tripartite efflux system composed of MdtA, MdtB and MdtC. MdtB forms a heteromultimer with MdtC.

The protein resides in the cell inner membrane. The chain is Multidrug resistance protein MdtB from Pectobacterium atrosepticum (strain SCRI 1043 / ATCC BAA-672) (Erwinia carotovora subsp. atroseptica).